Consider the following 233-residue polypeptide: Large ribosomal subunit protein uL1 (233 aa).

The protein belongs to the universal ribosomal protein uL1 family. In terms of assembly, part of the 50S ribosomal subunit.

Its function is as follows. Binds directly to 23S rRNA. The L1 stalk is quite mobile in the ribosome, and is involved in E site tRNA release. Functionally, protein L1 is also a translational repressor protein, it controls the translation of the L11 operon by binding to its mRNA. The polypeptide is Large ribosomal subunit protein uL1 (Vibrio campbellii (strain ATCC BAA-1116)).